Reading from the N-terminus, the 52-residue chain is DNA-directed RNA polymerase subunit Rpo12 (52 aa).

The Zn(2+) site is built by cysteine 13, cysteine 30, and cysteine 33.

This sequence belongs to the archaeal Rpo12/eukaryotic RPC10 RNA polymerase subunit family. In terms of assembly, part of the RNA polymerase complex. Zn(2+) serves as cofactor.

It is found in the cytoplasm. The catalysed reaction is RNA(n) + a ribonucleoside 5'-triphosphate = RNA(n+1) + diphosphate. DNA-dependent RNA polymerase (RNAP) catalyzes the transcription of DNA into RNA using the four ribonucleoside triphosphates as substrates. The chain is DNA-directed RNA polymerase subunit Rpo12 from Pyrobaculum neutrophilum (strain DSM 2338 / JCM 9278 / NBRC 100436 / V24Sta) (Thermoproteus neutrophilus).